Consider the following 488-residue polypeptide: MSGTVKDIVSKAELDNLRQSGAPVVLHFWASWCDASKQMDQVFSHLATDFPRAHFFRVEAEEHPEISEAYSVAAVPYFVFFKDGKTVDTLEGADPSSLANKVGKVAGSSTSAEPAAPASLGLAAGPTILETVKENAKASLQDRAQPVSTADALKSRLEKLTNSHPVMLFMKGIPEEPRCGFSRKVVDILKEVNVDFGSFDILSDNEVREGLKKFSNWPTFPQLYCNGELLGGADIAIAMHESGELKDAFKDLGITTVGSKESQDEAGKGGGVSSGNTGLSETLRARLEGLVNSKPVMLFMKGRPEEPKCGFSGKVVEILNQEKIEFGSFDILLDDEVRQGLKVYSNWSSYPQLYVKGELMGGSDIVLEMQKSGELKKVLTEKGITGEQSLEDRLKALINSSEVMLFMKGSPDEPKCGFSSKVVKALRGENVSFGSFDILTDEEVRQGIKNFSNWPTFPQLYYKGELIGGCDIIMELSESGDLKATLSE.

Positions 2–107 (SGTVKDIVSK…LANKVGKVAG (106 aa)) constitute a Thioredoxin domain. Glutaredoxin domains lie at 154–256 (KSRL…GITT), 284–386 (RARL…GITG), and 391–488 (EDRL…TLSE). Lys408 serves as a coordination point for glutathione. Cys416 is a binding site for [2Fe-2S] cluster. Residues Arg445, Phe457, and 470–471 (CD) each bind glutathione.

The protein belongs to the glutaredoxin family. CGFS subfamily. [2Fe-2S]-bridged holo-homodimer. Interacts in vitro with SUFE1, BOLA1, BOLA2 and BOLA4. Interacts in vivo only with BOLA2. Interacts with RGLG3 and RGLG4. In terms of processing, ubiquitinated at Lys-154. Polyubiquitinated by RGLG3 and RGLG4. Polyubiquitination of GRXS17 leads to its degradation by the proteasome.

It is found in the cytoplasm. Its function is as follows. May only reduce GSH-thiol disulfides, but not protein disulfides. Participates probably to the maturation of iron-sulfur proteins and to the regulation of the redox state of the BOLA proteins. The GRXS17-BOLA2 heterodimer binds a labile, oxygen sensitive iron-sulfur cluster. The chain is Monothiol glutaredoxin-S17 from Arabidopsis thaliana (Mouse-ear cress).